A 131-amino-acid polypeptide reads, in one-letter code: uncharacterized protein (131 aa).

The interval 112–131 is disordered; that stretch reads LTDNPGAVRKSQKSLIPPYN.

This is an uncharacterized protein from Fowl adenovirus A serotype 1 (strain CELO / Phelps) (FAdV-1).